The primary structure comprises 383 residues: NAD(P) transhydrogenase subunit alpha part 1 (383 aa).

NAD(+) is bound by residues 131–134 (QNMD), Val-181, 201–203 (DVR), and Gly-231.

This sequence belongs to the AlaDH/PNT family. In terms of assembly, heterotrimer of two alpha chains and a beta (PntB) chain; in Rickettsia, the alpha chain is made of two subunits (PntAA and PntAB) and forms a dimer.

The enzyme catalyses NAD(+) + NADPH + H(+)(in) = NADH + NADP(+) + H(+)(out). Functionally, the transhydrogenation between NADH and NADP is coupled to respiration and ATP hydrolysis and functions as a proton pump across the membrane. This chain is NAD(P) transhydrogenase subunit alpha part 1 (pntAA), found in Rickettsia prowazekii (strain Madrid E).